A 191-amino-acid polypeptide reads, in one-letter code: Probable calcium-binding protein CML8 (191 aa).

Residues 1 to 41 are disordered; the sequence is MASKYRGYYHDEASSAAGGGGGGGGGDGYRREKQVRKKRLT. A compositionally biased stretch (gly residues) spans 17–27; sequence AGGGGGGGGGD. EF-hand domains are found at residues 43 to 78, 79 to 114, 116 to 151, and 152 to 187; these read QKRK…LGFE, MTPE…KMGE, DARE…TGEP, and FTLD…IGFG. Residues D56, D58, S60, T62, E67, D92, D94, S96, T98, E103, D129, D131, N133, K135, D140, D165, N167, D169, E171, and E176 each coordinate Ca(2+).

Functionally, potential calcium sensor. The sequence is that of Probable calcium-binding protein CML8 (CML8) from Oryza sativa subsp. japonica (Rice).